The following is a 502-amino-acid chain: Membrane-bound lytic murein transglycosylase F (502 aa).

An N-terminal signal peptide occupies residues 1 to 33 (MSRFISTFRSSSAQLSIVLAVILATGCSQPTTL). The segment at 34 to 264 (QEIREEGVLH…QLAERFYGHL (231 aa)) is non-LT domain. The tract at residues 265–502 (DRLNYVGART…PELRLIPPTL (238 aa)) is LT domain. Glutamate 311 is an active-site residue. Residues 457-502 (PSASGLEDQLAWLGDNEAGPEAPAKESQPDLRADLPPELRLIPPTL) are disordered. Residues 479–493 (PAKESQPDLRADLPP) show a composition bias toward basic and acidic residues.

It in the N-terminal section; belongs to the bacterial solute-binding protein 3 family. This sequence in the C-terminal section; belongs to the transglycosylase Slt family.

It localises to the cell outer membrane. The catalysed reaction is Exolytic cleavage of the (1-&gt;4)-beta-glycosidic linkage between N-acetylmuramic acid (MurNAc) and N-acetylglucosamine (GlcNAc) residues in peptidoglycan, from either the reducing or the non-reducing ends of the peptidoglycan chains, with concomitant formation of a 1,6-anhydrobond in the MurNAc residue.. Murein-degrading enzyme that degrades murein glycan strands and insoluble, high-molecular weight murein sacculi, with the concomitant formation of a 1,6-anhydromuramoyl product. Lytic transglycosylases (LTs) play an integral role in the metabolism of the peptidoglycan (PG) sacculus. Their lytic action creates space within the PG sacculus to allow for its expansion as well as for the insertion of various structures such as secretion systems and flagella. This chain is Membrane-bound lytic murein transglycosylase F, found in Marinobacter nauticus (strain ATCC 700491 / DSM 11845 / VT8) (Marinobacter aquaeolei).